The primary structure comprises 228 residues: Ribulose-phosphate 3-epimerase (228 aa).

Ser9 lines the substrate pocket. His34, Asp36, His68, and Asp177 together coordinate a divalent metal cation. Asp36 functions as the Proton acceptor in the catalytic mechanism. Residues His68, Asp177 to Gly179, and Gly199 to Ser200 each bind substrate. Catalysis depends on Asp177, which acts as the Proton donor.

Belongs to the ribulose-phosphate 3-epimerase family. It depends on a divalent metal cation as a cofactor.

The catalysed reaction is D-ribulose 5-phosphate = D-xylulose 5-phosphate. The protein operates within carbohydrate degradation. Functionally, catalyzes the reversible epimerization of D-ribulose 5-phosphate to D-xylulose 5-phosphate. This chain is Ribulose-phosphate 3-epimerase, found in Buchnera aphidicola subsp. Schizaphis graminum (strain Sg).